A 262-amino-acid polypeptide reads, in one-letter code: ATP synthase subunit a 1 (262 aa).

5 consecutive transmembrane segments (helical) span residues Thr30–Phe50, Ile91–Ile111, Ile131–Met151, Leu201–Trp221, and Ala232–Val252.

It belongs to the ATPase A chain family. As to quaternary structure, F-type ATPases have 2 components, CF(1) - the catalytic core - and CF(0) - the membrane proton channel. CF(1) has five subunits: alpha(3), beta(3), gamma(1), delta(1), epsilon(1). CF(0) has three main subunits: a(1), b(2) and c(9-12). The alpha and beta chains form an alternating ring which encloses part of the gamma chain. CF(1) is attached to CF(0) by a central stalk formed by the gamma and epsilon chains, while a peripheral stalk is formed by the delta and b chains.

Its subcellular location is the cell inner membrane. Key component of the proton channel; it plays a direct role in the translocation of protons across the membrane. This chain is ATP synthase subunit a 1, found in Photobacterium profundum (strain SS9).